The primary structure comprises 171 residues: Protein GrpE (171 aa).

The disordered stretch occupies residues methionine 1 to glycine 22.

It belongs to the GrpE family. Homodimer.

It localises to the cytoplasm. Its function is as follows. Participates actively in the response to hyperosmotic and heat shock by preventing the aggregation of stress-denatured proteins, in association with DnaK and GrpE. It is the nucleotide exchange factor for DnaK and may function as a thermosensor. Unfolded proteins bind initially to DnaJ; upon interaction with the DnaJ-bound protein, DnaK hydrolyzes its bound ATP, resulting in the formation of a stable complex. GrpE releases ADP from DnaK; ATP binding to DnaK triggers the release of the substrate protein, thus completing the reaction cycle. Several rounds of ATP-dependent interactions between DnaJ, DnaK and GrpE are required for fully efficient folding. This is Protein GrpE from Stenotrophomonas maltophilia (strain K279a).